A 216-amino-acid polypeptide reads, in one-letter code: UDP-N-acetylglucosamine transferase subunit ALG14 (216 aa).

Over 1-3 the chain is Lumenal; the sequence is MVC. A helical transmembrane segment spans residues 4–24; sequence VLTLAASAGGLAVLLIVRLWA. The Cytoplasmic segment spans residues 25-216; it reads VLRSHPVTPR…PKSVYLGRIV (192 aa).

It belongs to the ALG14 family. In terms of assembly, forms with ALG13 the active heterodimeric UDP-N-acetylglucosamine transferase complex.

It is found in the endoplasmic reticulum membrane. Part of the UDP-N-acetylglucosamine transferase complex that operates in the biosynthetic pathway of dolichol-linked oligosaccharides, the glycan precursors employed in protein asparagine (N)-glycosylation. The assembly of dolichol-linked oligosaccharides begins on the cytosolic side of the endoplasmic reticulum membrane and finishes in its lumen. The sequential addition of sugars to dolichol pyrophosphate produces dolichol-linked oligosaccharides containing fourteen sugars, including two GlcNAcs, nine mannoses and three glucoses. Once assembled, the oligosaccharides are transferred from the lipid to nascent proteins by oligosaccharyltransferases. Functions as a protein-membrane adapter recruiting ALG13 at the cytoplasmic face of the endoplasmic reticulum, where the complex catalyzes the second step of dolichol pyrophosphate biosynthesis, transferring a beta1,4-linked N-acetylglucosamine (GlcNAc) from UDP-GlcNAc to GlcNAc-pyrophosphatedolichol (Gn-PDol) to produce N,N'-diacetylchitobiosyl diphosphodolichol. N,N'-diacetylchitobiosyl diphosphodolichol is a substrate for ALG1, the following enzyme in the biosynthetic pathway. This chain is UDP-N-acetylglucosamine transferase subunit ALG14, found in Rattus norvegicus (Rat).